The primary structure comprises 804 residues: Angiotensin-converting enzyme 2 (804 aa).

Residues 1–17 (MTGSFWLLLSLVAVTAA) form the signal peptide. Residues 18 to 739 (QSTTEEQAKT…LGPPYEPPVT (722 aa)) lie on the Extracellular side of the membrane. In terms of domain architecture, Peptidase M2 spans 19–606 (STTEEQAKTF…QNRNSFVGWS (588 aa)). N-linked (GlcNAc...) asparagine glycosylation is found at N53 and N90. R168 contacts chloride. Substrate is bound at residue R272. Residue N298 is glycosylated (N-linked (GlcNAc...) asparagine). C343 and C360 are oxidised to a cystine. 344-345 (HP) provides a ligand contact to substrate. H373 contacts Zn(2+). E374 acts as the Proton acceptor in catalysis. 2 residues coordinate Zn(2+): H377 and E401. Residue N431 is glycosylated (N-linked (GlcNAc...) asparagine). 2 residues coordinate chloride: W476 and K480. H504 serves as the catalytic Proton donor. Residue Y514 participates in substrate binding. A disulfide bridge links C529 with C541. Residue N545 is glycosylated (N-linked (GlcNAc...) asparagine). Residues 613 to 804 (SDQSIKVRIS…QNIDDVQTSL (192 aa)) enclose the Collectrin-like domain. The tract at residues 651-658 (RKYFSEAR) is essential for cleavage by ADAM17. Residues N659 and N689 are each glycosylated (N-linked (GlcNAc...) asparagine). Residues 696–715 (RTEVENAIRLSRDRINDVFQ) are essential for cleavage by TMPRSS11D and TMPRSS2. Residues 740–760 (IWLIIFGVVMGVVVIGIVVLI) traverse the membrane as a helical segment. Residues 761–804 (FTGIRNRRKKNQASSEENPYGSVDLNKGENNSGFQNIDDVQTSL) lie on the Cytoplasmic side of the membrane. A disordered region spans residues 771 to 804 (NQASSEENPYGSVDLNKGENNSGFQNIDDVQTSL). The LIR signature appears at 777–785 (ENPYGSVDL). Y780 bears the Phosphotyrosine mark. Positions 780–783 (YGSV) match the Endocytic sorting signal motif. The SH2-binding motif lies at 780 to 784 (YGSVD). The residue at position 782 (S782) is a Phosphoserine. K787 participates in a covalent cross-link: Glycyl lysine isopeptide (Lys-Gly) (interchain with G-Cter in ubiquitin). The span at 788 to 804 (GENNSGFQNIDDVQTSL) shows a compositional bias: polar residues. The PTB signature appears at 791-794 (NSGF). The short motif at 802–804 (TSL) is the PDZ-binding element.

This sequence belongs to the peptidase M2 family. As to quaternary structure, homodimer. Interacts with the catalytically active form of TMPRSS2. Interacts with SLC6A19; this interaction is essential for expression and function of SLC6A19 in intestine. Interacts with ITGA5:ITGB1. Probably interacts (via endocytic sorting signal motif) with AP2M1; the interaction is inhibited by phosphorylation of Tyr-780. Interacts (via PDZ-binding motif) with NHERF1 (via PDZ domains); the interaction may enhance ACE2 membrane residence. Zn(2+) is required as a cofactor. The cofactor is chloride. In terms of processing, proteolytic cleavage by ADAM17 generates a secreted form. Also cleaved by serine proteases: TMPRSS2, TMPRSS11D and HPN/TMPRSS1. Phosphorylated. Phosphorylation at Tyr-780 probably inhibits interaction with AP2M1 and enables interactions with proteins containing SH2 domains. Post-translationally, ubiquitinated. Ubiquitinated on Lys-787 via 'Lys-48'-linked ubiquitin. 'Lys-48'-linked deubiquitinated by USP50 on the Lys-787; leading to its stabilization.

The protein localises to the secreted. Its subcellular location is the cell membrane. It localises to the cytoplasm. It is found in the cell projection. The protein resides in the cilium. The protein localises to the apical cell membrane. The catalysed reaction is angiotensin II + H2O = angiotensin-(1-7) + L-phenylalanine. It carries out the reaction angiotensin I + H2O = angiotensin-(1-9) + L-leucine. It catalyses the reaction bradykinin(1-8) + H2O = bradykinin(1-7) + L-phenylalanine. The enzyme catalyses neurotensin + H2O = neurotensin-(1-12) + L-leucine. The catalysed reaction is kinetensin + H2O = kinetensin-(1-8) + L-leucine. It carries out the reaction dynorphin A-(1-13) + H2O = dynorphin A-(1-12) + L-lysine. It catalyses the reaction apelin-13 + H2O = apelin-12 + L-phenylalanine. The enzyme catalyses [Pyr1]apelin-13 + H2O = [Pyr1]apelin-12 + L-phenylalanine. The catalysed reaction is apelin-17 + H2O = apelin-16 + L-phenylalanine. In terms of biological role, essential counter-regulatory carboxypeptidase of the renin-angiotensin hormone system that is a critical regulator of blood volume, systemic vascular resistance, and thus cardiovascular homeostasis. Converts angiotensin I to angiotensin 1-9, a nine-amino acid peptide with anti-hypertrophic effects in cardiomyocytes, and angiotensin II to angiotensin 1-7, which then acts as a beneficial vasodilator and anti-proliferation agent, counterbalancing the actions of the vasoconstrictor angiotensin II. Also removes the C-terminal residue from three other vasoactive peptides, neurotensin, kinetensin, and des-Arg bradykinin, but is not active on bradykinin. Also cleaves other biological peptides, such as apelins, casomorphins and dynorphin A. Plays an important role in amino acid transport by acting as binding partner of amino acid transporter SLC6A19 in intestine, regulating trafficking, expression on the cell surface, and its catalytic activity. In Bos taurus (Bovine), this protein is Angiotensin-converting enzyme 2 (ACE2).